Reading from the N-terminus, the 81-residue chain is Photosystem I iron-sulfur center (81 aa).

4Fe-4S ferredoxin-type domains are found at residues 2 to 31 (SHSV…MVPW) and 39 to 68 (IASS…IRVY). [4Fe-4S] cluster-binding residues include Cys-11, Cys-14, Cys-17, Cys-21, Cys-48, Cys-51, Cys-54, and Cys-58.

In terms of assembly, the G.violaceus PSI reaction center is composed of one copy each of PsaA,B,C,D,E,F,L,M and Z, and forms trimeric complexes. Requires [4Fe-4S] cluster as cofactor.

The protein localises to the cell inner membrane. It carries out the reaction reduced [plastocyanin] + hnu + oxidized [2Fe-2S]-[ferredoxin] = oxidized [plastocyanin] + reduced [2Fe-2S]-[ferredoxin]. Apoprotein for the two 4Fe-4S centers FA and FB of photosystem I (PSI); essential for photochemical activity. FB is the terminal electron acceptor of PSI, donating electrons to ferredoxin. The C-terminus interacts with PsaA/B/D and helps assemble the protein into the PSI complex. Required for binding of PsaD and PsaE to PSI. PSI is a plastocyanin/cytochrome c6-ferredoxin oxidoreductase, converting photonic excitation into a charge separation, which transfers an electron from the donor P700 chlorophyll pair to the spectroscopically characterized acceptors A0, A1, FX, FA and FB in turn. This is Photosystem I iron-sulfur center from Gloeobacter violaceus (strain ATCC 29082 / PCC 7421).